Here is a 401-residue protein sequence, read N- to C-terminus: Probable 2,3-bisphosphoglycerate-independent phosphoglycerate mutase (401 aa).

It belongs to the BPG-independent phosphoglycerate mutase family. A-PGAM subfamily.

The enzyme catalyses (2R)-2-phosphoglycerate = (2R)-3-phosphoglycerate. It functions in the pathway carbohydrate degradation; glycolysis; pyruvate from D-glyceraldehyde 3-phosphate: step 3/5. In terms of biological role, catalyzes the interconversion of 2-phosphoglycerate and 3-phosphoglycerate. In Thermotoga sp. (strain RQ2), this protein is Probable 2,3-bisphosphoglycerate-independent phosphoglycerate mutase.